The following is an 836-amino-acid chain: Granulocyte colony-stimulating factor receptor (836 aa).

The N-terminal stretch at 1–24 is a signal peptide; sequence MARLGNCSLTWAALIILLLPGSLE. Residues 25–117 enclose the Ig-like C2-type domain; that stretch reads ECGHISVSAP…SLQILDQVEL (93 aa). Residues 25 to 627 lie on the Extracellular side of the membrane; that stretch reads ECGHISVSAP…TLTPEGSELH (603 aa). 2 disulfide bridges follow: cysteine 26-cysteine 52 and cysteine 46-cysteine 101. N-linked (GlcNAc...) asparagine glycosylation is found at asparagine 51, asparagine 93, asparagine 128, and asparagine 134. 5 Fibronectin type-III domains span residues 125–230, 233–332, 334–430, 431–528, and 530–623; these read IPHN…LEPP, RTMD…TTER, PTVR…SRGP, ALTR…MAPS, and APEL…TPEG. Cystine bridges form between cysteine 131–cysteine 142, cysteine 167–cysteine 218, cysteine 177–cysteine 186, cysteine 248–cysteine 295, and cysteine 266–cysteine 309. Residues 318–322 carry the WSXWS motif motif; sequence WSDWS. N-linked (GlcNAc...) asparagine glycosylation is found at asparagine 389, asparagine 474, asparagine 579, and asparagine 610. A helical transmembrane segment spans residues 628–650; it reads IILGLFGLLLLLTCLCGTAWLCC. Residues 651–836 are Cytoplasmic-facing; sequence SPNRKNPLWP…VHGMEALGSF (186 aa). The short motif at 658–666 is the Box 1 motif element; sequence LWPSVPDPA.

Belongs to the type I cytokine receptor family. Type 2 subfamily. In terms of assembly, homodimer. The dimeric receptor binds two CSF3 molecules. Interacts with CEACAM1; down-regulates the CSF3R-STAT3 pathway through recruitment of PTPN6 that dephosphorylates CSF3R. N-glycosylated. One or several isoforms have been found in myelogenous leukemia cell line KG-1, leukemia U-937 cell line, in bone marrow cells, placenta, and peripheral blood granulocytes. Isoform GCSFR-2 is found only in leukemia U-937 cells. Isoform GCSFR-3 is highly expressed in placenta.

Its subcellular location is the secreted. The protein resides in the cell membrane. In terms of biological role, receptor for granulocyte colony-stimulating factor (CSF3), essential for granulocytic maturation. Plays a crucial role in the proliferation, differentiation and survival of cells along the neutrophilic lineage. In addition it may function in some adhesion or recognition events at the cell surface. This Homo sapiens (Human) protein is Granulocyte colony-stimulating factor receptor (CSF3R).